The following is a 215-amino-acid chain: Octanoyltransferase (215 aa).

The BPL/LPL catalytic domain occupies 42 to 215 (QNTPDEIWLL…AEKLKARLKQ (174 aa)). Substrate is bound by residues 81–88 (RGGQITYH), 148–150 (ALG), and 161–163 (GLA). Cys-179 serves as the catalytic Acyl-thioester intermediate.

This sequence belongs to the LipB family.

It is found in the cytoplasm. It carries out the reaction octanoyl-[ACP] + L-lysyl-[protein] = N(6)-octanoyl-L-lysyl-[protein] + holo-[ACP] + H(+). The protein operates within protein modification; protein lipoylation via endogenous pathway; protein N(6)-(lipoyl)lysine from octanoyl-[acyl-carrier-protein]: step 1/2. Functionally, catalyzes the transfer of endogenously produced octanoic acid from octanoyl-acyl-carrier-protein onto the lipoyl domains of lipoate-dependent enzymes. Lipoyl-ACP can also act as a substrate although octanoyl-ACP is likely to be the physiological substrate. The chain is Octanoyltransferase from Nitrosospira multiformis (strain ATCC 25196 / NCIMB 11849 / C 71).